The following is a 265-amino-acid chain: Cyclin-C (265 aa).

The Cyclin N-terminal domain occupies 48–151; sequence IQVLGEQLKL…LLENLDCCLI (104 aa).

This sequence belongs to the cyclin family. Cyclin C subfamily. Component of the Cdk8 module of the Mediator complex.

Its subcellular location is the nucleus. Functionally, component of the Mediator complex, a coactivator involved in regulated gene transcription of nearly all RNA polymerase II-dependent genes. Mediator functions as a bridge to convey information from gene-specific regulatory proteins to the basal RNA polymerase II transcription machinery. Mediator is recruited to promoters by direct interactions with regulatory proteins and serves as a scaffold for the assembly of a functional preinitiation complex with RNA polymerase II and the general transcription factors. Binds to and activates cyclin-dependent kinase Cdk8 that phosphorylates the CTD (C-terminal domain) of the large subunit of RNA polymerase II (RNAp II), which may inhibit the formation of a transcription initiation complex. The chain is Cyclin-C (CycC) from Aedes aegypti (Yellowfever mosquito).